The chain runs to 676 residues: Maternal embryonic leucine zipper kinase (676 aa).

The Protein kinase domain occupies 13–265; it reads YEVYETIGSG…VKHLLDHPWV (253 aa). ATP is bound by residues 19-27 and Lys-42; that span reads IGSGGFAKV. Catalysis depends on Asp-134, which acts as the Proton acceptor. Position 169 is a phosphothreonine; by autocatalysis (Thr-169). Ser-173 is modified (phosphoserine; by autocatalysis). Residues 284–323 form a UBA-like region; that stretch reads IDEDCITEMAVTFKQSKQRTIQLVSEWKYDQITATYLLLL. The interval 328–673 is autoinhibitory region; the sequence is QGRPVRLRAE…VEDILSSSSQ (346 aa). Positions 423 to 443 are enriched in basic and acidic residues; it reads EHSRPCRQKPERRERTKENKE. The tract at residues 423 to 518 is disordered; it reads EHSRPCRQKP…QQNGQQGELN (96 aa). A compositionally biased stretch (polar residues) spans 462 to 489; that stretch reads TPTSSRKVKSNRTVMTTPNHNNNKSSEV. Positions 508-518 are enriched in low complexity; the sequence is QQQNGQQGELN. Residues 624-673 form the KA1 domain; it reads SDFGKVTMQFELEVCLLQKPEVVGIRRQRLKGDAWVYKHLVEDILSSSSQ.

This sequence belongs to the protein kinase superfamily. CAMK Ser/Thr protein kinase family. SNF1 subfamily. Post-translationally, autophosphorylated: autophosphorylation of the T-loop at Thr-169 and Ser-173 is required for activation. In terms of tissue distribution, strongly expressed in the eye, gill, kidney, spleen, muscle, ovary and testis and weakly in the heart, liver, and gut. Expressed in the brain and lateral mesoderm at 12 hours post-fertilization (hpf).

The protein localises to the cell membrane. It carries out the reaction L-seryl-[protein] + ATP = O-phospho-L-seryl-[protein] + ADP + H(+). The enzyme catalyses L-threonyl-[protein] + ATP = O-phospho-L-threonyl-[protein] + ADP + H(+). With respect to regulation, activated by autophosphorylation of the T-loop at Thr-169 and Ser-173: in contrast to other members of the SNF1 subfamily, phosphorylation at Thr-169 is not mediated by STK11/LKB1 but via autophosphorylation instead. Serine/threonine-protein kinase involved in various processes such as cell cycle regulation, self-renewal of stem cells, apoptosis and splicing regulation. Also plays a role in primitive hematopoiesis, possibly by affecting the expression of genes critical for hematopoiesis. The polypeptide is Maternal embryonic leucine zipper kinase (melk) (Danio rerio (Zebrafish)).